A 113-amino-acid polypeptide reads, in one-letter code: Fruiting body-specific class I hydrophobin fbh1 (113 aa).

An N-terminal signal peptide occupies residues 1-23; the sequence is MFSIRIATVVLAASAALRPPARI. Disulfide bonds link cysteine 33–cysteine 92, cysteine 40–cysteine 86, cysteine 41–cysteine 73, and cysteine 93–cysteine 106.

This sequence belongs to the fungal hydrophobin family. In terms of assembly, self-assembles to form functional amyloid fibrils called rodlets. Self-assembly into fibrillar rodlets occurs spontaneously at hydrophobic:hydrophilic interfaces and the rodlets further associate laterally to form amphipathic monolayers.

The protein localises to the secreted. Its subcellular location is the cell wall. Aerial growth, conidiation, and dispersal of filamentous fungi in the environment rely upon a capability of their secreting small amphipathic proteins called hydrophobins (HPBs) with low sequence identity. Class I can self-assemble into an outermost layer of rodlet bundles on aerial cell surfaces, conferring cellular hydrophobicity that supports fungal growth, development and dispersal; whereas Class II form highly ordered films at water-air interfaces through intermolecular interactions but contribute nothing to the rodlet structure. Fbh1 is a fruiting body-specific class I hydrophobin that is involved in the growth rate and primordia formation. The polypeptide is Fruiting body-specific class I hydrophobin fbh1 (Pleurotus ostreatus (Oyster mushroom)).